The sequence spans 113 residues: Hydrogenase maturation factor HybF (113 aa).

Ni(2+)-binding residues include His-2 and Glu-3. Zn(2+) contacts are provided by Cys-73, Cys-76, Cys-89, and Cys-92.

Belongs to the HypA/HybF family. HybF subfamily.

Involved in the maturation of [NiFe] hydrogenases. Required for nickel insertion into the metal center of the hydrogenase. In Klebsiella pneumoniae, this protein is Hydrogenase maturation factor HybF.